We begin with the raw amino-acid sequence, 278 residues long: MRCLKSFRHGFTLGTNCYEPGAKRPRGDRSTVGGWSHGSTSRNIAFLRSIDEAKLTGHALALTLTVRDCPDTSDDWYKVRRAFEMRLRRLGLIRMHWVIEWQRRGVPHLHCAAFFDDTAPALLPAVIMRSWCDLVSDYNASPLSQYVLPITDAIGWFQYVSKHAARGVNHYQRSPENIPPQWQKKTGRMWGKVGEWPVVEKAEIFMGDATFYQLRRIVKRWRFADARASGSIHRIRSAKKYLQVPETLSRVLGASEWMPENELLSILYFLKSQGYEFL.

This sequence belongs to the inovirus G2P protein family.

The enzyme catalyses ATP + (deoxyribonucleotide)n-3'-hydroxyl + 5'-phospho-(deoxyribonucleotide)m = (deoxyribonucleotide)n+m + AMP + diphosphate.. Functionally, isoform G2P plays an essential role in viral DNA replication. Binds the origin of replication and cleaves the dsDNA replicative form I (RFI) and becomes covalently bound to it via phosphotyrosine bond, generating the dsDNA replicative form II (RFII). In turn, viral DNA replication initiates at the 3'-OH of the cleavage site. After one round of rolling circle synthesis, protein G2P is linked to the newly synthesized ssDNA and joins the ends of the displaced strand to generate a circular single-stranded molecule ready to be packed into a virion. In terms of biological role, isoform G10P protein binds to double-stranded DNA and prevents hydrolysis by nucleases. Additionally, G10P is an inhibitor of DNA replication and may have a role in the transition from semiconservative replicative form DNA replication to single-stranded DNA synthesis in the life cycle. The sequence is that of Replication-associated protein G2P (II) from Pseudomonas aeruginosa (Bacteriophage Pf3).